A 1010-amino-acid chain; its full sequence is Peroxisome proliferator-activated receptor gamma coactivator 1-beta (1010 aa).

The tract at residues 1–91 (MAGNDCGALL…FFQIDSENEA (91 aa)) is abolishes DNA transcriptional activity when missing. The tract at residues 115-134 (GLDEGDTPSCTPASPAPLSV) is disordered. Residues 140 to 144 (LERLL) carry the LXXLL motif 1 motif. Ser-145 and Ser-148 each carry phosphoserine. Residues 156 to 160 (LQKLL) carry the LXXLL motif 2 motif. Disordered stretches follow at residues 165–214 (SPTA…RPCT), 227–282 (PRGK…QVPK), and 306–329 (PQRASEPIPQSCSSPLRKVPPRSR). Composition is skewed to polar residues over residues 178–189 (TWSQTSLSSRSQ) and 264–279 (PQDSLGQDTANPNSAQ). An LXXLL motif 3 motif is present at residues 342–346 (LRELL). A compositionally biased stretch (polar residues) spans 369 to 384 (TPQSRTRPPKDSQASP). 3 disordered regions span residues 369 to 475 (TPQS…VCPV), 517 to 567 (GLTD…CLML), and 590 to 674 (GTAG…QKRP). Phosphoserine is present on Ser-383. A compositionally biased stretch (basic and acidic residues) spans 411–428 (LRLEVKRDVNKPARQKRE). Residues 429-449 (EDEEEEEEEEEEEEKEDEEEE) are compositionally biased toward acidic residues. Residues 521–532 (SSQGQQLPLGSQ) show a composition bias toward low complexity. Basic and acidic residues predominate over residues 604 to 618 (PMEEDPFKQDTKHSP). Composition is skewed to polar residues over residues 619–638 (GQDTAPSLPSPETLQLTATP) and 659–670 (QHATTQPVSQAG). At Ser-628 the chain carries Phosphoserine. Residues 681 to 684 (DHDY) carry the HCFC1-binding-motif (HBM) motif. Disordered stretches follow at residues 714–744 (HQGATLPVETKTPRREADQNCDPTPKDSMQL) and 778–881 (DTVF…KKRR). Positions 782–794 (EDSSSSSGESSFL) are enriched in low complexity. Residues 795-811 (LEEEEEEGGEEDDEGED) are compositionally biased toward acidic residues. Over residues 832-852 (SRQLCSRSRSSSGSSSCSSWS) the composition is skewed to low complexity. The RRM domain maps to 889–963 (RVVYIRNLSG…RNEPSFHLSY (75 aa)).

Interacts with estrogen receptor alpha/ESR1. Interacts with Sterol regulatory binding transcription factor 1/SREBF1, PPAR-alpha/PPARA, thyroid hormone receptor beta/THRB and host cell factor/HCFC1. Interacts with Estrogen-related receptor gamma/ESRRG and alpha/ESRRA. Interacts with PRDM16. Ubiquitous with higher expression in heart, brown adipose tissue.

The protein resides in the nucleus. Its function is as follows. Plays a role of stimulator of transcription factors and nuclear receptors activities. Activates transcriptional activity of estrogen receptor alpha, nuclear respiratory factor 1 (NRF1) and glucocorticoid receptor in the presence of glucocorticoids. May play a role in constitutive non-adrenergic-mediated mitochondrial biogenesis as suggested by increased basal oxygen consumption and mitochondrial number when overexpressed. May be part of the pathways regulating the elevation of gluconeogenesis, beta-oxidation of fatty acids and ketogenesis during fasting. Stimulates SREBP-mediated lipogenic gene expression in the liver. Induces energy expenditure and antagonizes obesity when overexpressed. Also induces the expression of mitochondrial genes involved in oxidative metabolism. Induces the expression of PERM1 in the skeletal muscle in an ESRRA-dependent manner. The chain is Peroxisome proliferator-activated receptor gamma coactivator 1-beta (Ppargc1b) from Rattus norvegicus (Rat).